The sequence spans 424 residues: Glutamate-1-semialdehyde 2,1-aminomutase (424 aa).

Position 263 is an N6-(pyridoxal phosphate)lysine (K263).

This sequence belongs to the class-III pyridoxal-phosphate-dependent aminotransferase family. HemL subfamily. Homodimer. Pyridoxal 5'-phosphate serves as cofactor.

It localises to the cytoplasm. It carries out the reaction (S)-4-amino-5-oxopentanoate = 5-aminolevulinate. Its pathway is porphyrin-containing compound metabolism; protoporphyrin-IX biosynthesis; 5-aminolevulinate from L-glutamyl-tRNA(Glu): step 2/2. The polypeptide is Glutamate-1-semialdehyde 2,1-aminomutase (Campylobacter jejuni (strain RM1221)).